The sequence spans 646 residues: MRVSNVTVRKRLLFVLLFGVIVFLIIDTRLGYVQFVMGEKLTSLAKDSWSRNLPFEPERGEILDRNGVKLATNKSAPTVFVVPRQVQNPMKTSKQLAAVLNMSEEKVYKHVTKKASIEKITPEGRKISNEKAKEIKALDLKGVYVAEDSIRHYPFGSFLSHVLGFAGIDNQGLLGLEAYYDDDLKGEKGSVKFYTDAKGKKMPDEADDYTPPKDGLDMKLTVDSKVQTIMERELDNAEAKYHPDGMIAVAMNPKNGEILGMSSRPDFDPADYQSVDPSVYNRNLPVWSTYEPGSTFKIITLAAALEEQKVNLKRDQFYDKGHAEVDGARLRCWKRGGHGLQTYLEVVQNSCNPGFVELGERLGKEKLFKYIKDFGFGQKTGIDLQGEGTGILFPLERVGPVEQATTAFGQGVSVTPIQQVAAVSAAVNGGTLYTPYIAKEWIDPVTKKTVKKQSPIAKKQVISEETSKQIRYALESVVAEGTGRNAFVEGYRVGGKTGTAQKVKDGKYLENNHIVSFIGFAPADDPSLVVYVAVDNPKGTIQFGGTVAAPIVGNIMRDSLPELGVKPRKNQIEKKYQWNDTKTIEVPNVVGMSVSDLESLLVNLNVDASGKGSKIVKQSPAAGTKVKEGSKIRVYLTEEDEKEAAD.

The active-site Acyl-ester intermediate is the Ser294. The PASTA domain occupies 580–638 (DTKTIEVPNVVGMSVSDLESLLVNLNVDASGKGSKIVKQSPAAGTKVKEGSKIRVYLTE).

This sequence belongs to the transpeptidase family.

The protein resides in the cell membrane. It carries out the reaction Preferential cleavage: (Ac)2-L-Lys-D-Ala-|-D-Ala. Also transpeptidation of peptidyl-alanyl moieties that are N-acyl substituents of D-alanine.. Its pathway is cell wall biogenesis; peptidoglycan biosynthesis. Functionally, penicillin-binding protein with an unknown catalytic activity. May have a specialized role in the morphogenesis of spore cortex, which is a modified form of peptidoglycan. Spore cortex formation is determined primarily by the mother cell. This chain is Stage V sporulation protein D (spoVD), found in Bacillus subtilis (strain 168).